Reading from the N-terminus, the 312-residue chain is 4-hydroxy-3-methylbut-2-enyl diphosphate reductase (312 aa).

Cysteine 14 contacts [4Fe-4S] cluster. 2 residues coordinate (2E)-4-hydroxy-3-methylbut-2-enyl diphosphate: histidine 43 and histidine 76. 2 residues coordinate dimethylallyl diphosphate: histidine 43 and histidine 76. Positions 43 and 76 each coordinate isopentenyl diphosphate. Cysteine 98 is a [4Fe-4S] cluster binding site. Histidine 125 serves as a coordination point for (2E)-4-hydroxy-3-methylbut-2-enyl diphosphate. Residue histidine 125 participates in dimethylallyl diphosphate binding. Histidine 125 serves as a coordination point for isopentenyl diphosphate. Glutamate 127 acts as the Proton donor in catalysis. Threonine 165 contributes to the (2E)-4-hydroxy-3-methylbut-2-enyl diphosphate binding site. Cysteine 195 lines the [4Fe-4S] cluster pocket. Residues serine 223, serine 224, asparagine 225, and serine 269 each contribute to the (2E)-4-hydroxy-3-methylbut-2-enyl diphosphate site. Residues serine 223, serine 224, asparagine 225, and serine 269 each coordinate dimethylallyl diphosphate. 4 residues coordinate isopentenyl diphosphate: serine 223, serine 224, asparagine 225, and serine 269.

It belongs to the IspH family. Requires [4Fe-4S] cluster as cofactor.

The enzyme catalyses isopentenyl diphosphate + 2 oxidized [2Fe-2S]-[ferredoxin] + H2O = (2E)-4-hydroxy-3-methylbut-2-enyl diphosphate + 2 reduced [2Fe-2S]-[ferredoxin] + 2 H(+). It catalyses the reaction dimethylallyl diphosphate + 2 oxidized [2Fe-2S]-[ferredoxin] + H2O = (2E)-4-hydroxy-3-methylbut-2-enyl diphosphate + 2 reduced [2Fe-2S]-[ferredoxin] + 2 H(+). It participates in isoprenoid biosynthesis; dimethylallyl diphosphate biosynthesis; dimethylallyl diphosphate from (2E)-4-hydroxy-3-methylbutenyl diphosphate: step 1/1. The protein operates within isoprenoid biosynthesis; isopentenyl diphosphate biosynthesis via DXP pathway; isopentenyl diphosphate from 1-deoxy-D-xylulose 5-phosphate: step 6/6. Catalyzes the conversion of 1-hydroxy-2-methyl-2-(E)-butenyl 4-diphosphate (HMBPP) into a mixture of isopentenyl diphosphate (IPP) and dimethylallyl diphosphate (DMAPP). Acts in the terminal step of the DOXP/MEP pathway for isoprenoid precursor biosynthesis. The chain is 4-hydroxy-3-methylbut-2-enyl diphosphate reductase from Leptospira interrogans serogroup Icterohaemorrhagiae serovar copenhageni (strain Fiocruz L1-130).